Reading from the N-terminus, the 243-residue chain is Phosphate-specific transport system accessory protein PhoU (243 aa).

This sequence belongs to the PhoU family. Homodimer.

It is found in the cytoplasm. In terms of biological role, part of the phosphate (Pho) regulon, which plays a key role in phosphate homeostasis. Encoded together with proteins of the phosphate-specific transport (Pst) system in the polycistronic pstSCAB-phoU operon. PhoU is essential for the repression of the Pho regulon at high phosphate conditions. In this role, it may bind, possibly as a chaperone, to PhoR, PhoB or a PhoR-PhoB complex to promote dephosphorylation of phospho-PhoB, or inhibit formation of the PhoR-PhoB transitory complex. In Serratia marcescens, this protein is Phosphate-specific transport system accessory protein PhoU.